A 61-amino-acid chain; its full sequence is Probable tautomerase stu1128 (61 aa).

Pro2 (proton acceptor; via imino nitrogen) is an active-site residue.

Belongs to the 4-oxalocrotonate tautomerase family.

The sequence is that of Probable tautomerase stu1128 from Streptococcus thermophilus (strain ATCC BAA-250 / LMG 18311).